We begin with the raw amino-acid sequence, 209 residues long: MGYFPYLAVFVCLLASGDAQWKGLRGSTKASWVRVVSPTLNVTQEAYIWDADSGISFISRSKLLTGTSINRNRAYTDYNQPKIAIKFRKDVGRTCILLDVASALIGTFNETSTNLQALTVLDTTEEKSYQSVGTVLSATSQSAFDLQHPFIQKKCSDRNYNYLATTELTAGAAPPPASDKFTVFTTWGKVHLYILQSTGLVITTTTEAP.

Positions 1–19 (MGYFPYLAVFVCLLASGDA) are cleaved as a signal peptide. 2 N-linked (GlcNAc...) asparagine glycosylation sites follow: N41 and N109.

Component of the acid-soluble organic matrix of prismatic shell layers (at protein level).

It localises to the secreted. This is an uncharacterized protein from Haliotis asinina (Donkey's ear abalone).